We begin with the raw amino-acid sequence, 642 residues long: Threonine--tRNA ligase (642 aa).

The TGS domain maps to 1–61 (MPVITLPDGS…ETDAELSIIT (61 aa)). Residues 243–534 (DHRKIGKQLD…LIEEYAGRFP (292 aa)) form a catalytic region. Zn(2+) is bound by residues Cys334, His385, and His511.

It belongs to the class-II aminoacyl-tRNA synthetase family. Homodimer. The cofactor is Zn(2+).

It localises to the cytoplasm. The catalysed reaction is tRNA(Thr) + L-threonine + ATP = L-threonyl-tRNA(Thr) + AMP + diphosphate + H(+). Catalyzes the attachment of threonine to tRNA(Thr) in a two-step reaction: L-threonine is first activated by ATP to form Thr-AMP and then transferred to the acceptor end of tRNA(Thr). Also edits incorrectly charged L-seryl-tRNA(Thr). This is Threonine--tRNA ligase from Shewanella oneidensis (strain ATCC 700550 / JCM 31522 / CIP 106686 / LMG 19005 / NCIMB 14063 / MR-1).